Reading from the N-terminus, the 565-residue chain is Mannosyl-oligosaccharide 1,2-alpha-mannosidase (565 aa).

Cys-320 and Cys-363 form a disulfide bridge. Residue Glu-378 is the Proton donor of the active site. Thr-501 contributes to the Ca(2+) binding site. 2 stretches are compositionally biased toward basic and acidic residues: residues 526–538 (NEKA…KVID) and 550–565 (KSAD…EIAG). Residues 526–565 (NEKAQMRESKVIDKSNLPEAQPVDKSADQEAKEIIEEIAG) are disordered.

Belongs to the glycosyl hydrolase 47 family. Requires Ca(2+) as cofactor.

The enzyme catalyses N(4)-(alpha-D-Man-(1-&gt;2)-alpha-D-Man-(1-&gt;2)-alpha-D-Man-(1-&gt;3)-[alpha-D-Man-(1-&gt;2)-alpha-D-Man-(1-&gt;3)-[alpha-D-Man-(1-&gt;2)-alpha-D-Man-(1-&gt;6)]-alpha-D-Man-(1-&gt;6)]-beta-D-Man-(1-&gt;4)-beta-D-GlcNAc-(1-&gt;4)-beta-D-GlcNAc)-L-asparaginyl-[protein] (N-glucan mannose isomer 9A1,2,3B1,2,3) + 4 H2O = N(4)-(alpha-D-Man-(1-&gt;3)-[alpha-D-Man-(1-&gt;3)-[alpha-D-Man-(1-&gt;6)]-alpha-D-Man-(1-&gt;6)]-beta-D-Man-(1-&gt;4)-beta-D-GlcNAc-(1-&gt;4)-beta-D-GlcNAc)-L-asparaginyl-[protein] (N-glucan mannose isomer 5A1,2) + 4 beta-D-mannose. It catalyses the reaction N(4)-(alpha-D-Man-(1-&gt;2)-alpha-D-Man-(1-&gt;2)-alpha-D-Man-(1-&gt;3)-[alpha-D-Man-(1-&gt;3)-[alpha-D-Man-(1-&gt;2)-alpha-D-Man-(1-&gt;6)]-alpha-D-Man-(1-&gt;6)]-beta-D-Man-(1-&gt;4)-beta-D-GlcNAc-(1-&gt;4)-beta-D-GlcNAc)-L-asparaginyl-[protein] (N-glucan mannose isomer 8A1,2,3B1,3) + 3 H2O = N(4)-(alpha-D-Man-(1-&gt;3)-[alpha-D-Man-(1-&gt;3)-[alpha-D-Man-(1-&gt;6)]-alpha-D-Man-(1-&gt;6)]-beta-D-Man-(1-&gt;4)-beta-D-GlcNAc-(1-&gt;4)-beta-D-GlcNAc)-L-asparaginyl-[protein] (N-glucan mannose isomer 5A1,2) + 3 beta-D-mannose. The protein operates within protein modification; protein glycosylation. Functionally, involved in the maturation of Asn-linked oligosaccharides. Trim a single alpha-1,2-linked mannose residue from Man(9)GlcNAc(2) to produce Man(8)GlcNAc(2). The polypeptide is Mannosyl-oligosaccharide 1,2-alpha-mannosidase (MNS1) (Candida albicans (Yeast)).